The following is a 562-amino-acid chain: Sperm-tail PG-rich repeat-containing protein 2 (562 aa).

STPGR repeat units lie at residues Gly-21 to Leu-31, Ser-60 to Asn-73, and Pro-96 to Pro-118. Disordered stretches follow at residues Lys-114 to Ile-136 and Ser-192 to Gln-215. Residues Pro-127–Ile-136 show a composition bias toward low complexity. The segment covering Gly-193–Asp-202 has biased composition (basic and acidic residues). 6 STPGR repeats span residues Pro-204 to Glu-227, Pro-253 to His-271, Thr-336 to Ala-350, Thr-385 to Phe-409, Thr-425 to Leu-462, and Thr-478 to Ser-492. Residues Ser-543–Ala-562 form a disordered region. The segment covering Arg-551–Ala-562 has biased composition (basic residues).

This chain is Sperm-tail PG-rich repeat-containing protein 2 (stpg2), found in Danio rerio (Zebrafish).